Reading from the N-terminus, the 791-residue chain is Metabotropic glutamate receptor-like protein D (791 aa).

Positions 1 to 22 (MKINSFLIILILLFISIKNSNG) are cleaved as a signal peptide. Residues 23–390 (EPEKKFKLIT…TEVYQSRPIQ (368 aa)) lie on the Extracellular side of the membrane. 6 N-linked (GlcNAc...) asparagine glycosylation sites follow: Asn72, Asn168, Asn279, Asn290, Asn306, and Asn349. The chain crosses the membrane as a helical span at residues 391–411 (IAISSISSFFIVTVLVMMGLV). The Cytoplasmic segment spans residues 412 to 424 (VRFRKNPSIRSAS). The chain crosses the membrane as a helical span at residues 425–445 (PIFLNFILFGALIIYVGIIIW). The Extracellular segment spans residues 446–453 (SSSINSAS). A helical transmembrane segment spans residues 454–474 (CNAQFWLVTLGFTTLIGSLVV). Over 475 to 495 (KNVRIWLIFDNPELKLVKITN) the chain is Cytoplasmic. Residues 496-516 (LQLVPWVGVCLVINIILMSIL) traverse the membrane as a helical segment. Over 517–550 (TSVGDLREVNAQGIDSLGKYEFMRICKMNSSGAS) the chain is Extracellular. Asn545 carries N-linked (GlcNAc...) asparagine glycosylation. Residues 551–571 (TLYTILAYFAALLLIGVFVSW) form a helical membrane-spanning segment. Residues 572-585 (KIRIVDILEFNESK) are Cytoplasmic-facing. Residues 586-606 (AIANTLYAISFCLFVIVPLMI) traverse the membrane as a helical segment. At 607–615 (SPQDKQSEK) the chain is on the extracellular side. Residues 616–636 (IILCIAGLFIVTAAVLIIFVP) traverse the membrane as a helical segment. Residues 637–791 (KFYRVYIFGS…KNEENNDGDN (155 aa)) are Cytoplasmic-facing. 2 disordered regions span residues 664 to 715 (TARA…SEPN) and 746 to 791 (IITE…DGDN). The span at 674–689 (SSGGGAGSGGATGGSG) shows a compositional bias: gly residues. The span at 749 to 760 (ENGQDSNNNNNN) shows a compositional bias: low complexity. A coiled-coil region spans residues 752–781 (QDSNNNNNNEENKDNNIENNKISEEIKENL). Over residues 761-785 (EENKDNNIENNKISEEIKENLKNEE) the composition is skewed to basic and acidic residues.

The protein in the N-terminal section; belongs to the BMP lipoprotein family. It in the C-terminal section; belongs to the G-protein coupled receptor 3 family. GABA-B receptor subfamily.

It is found in the membrane. The chain is Metabotropic glutamate receptor-like protein D (grlD) from Dictyostelium discoideum (Social amoeba).